The primary structure comprises 337 residues: Protein-methionine-sulfoxide reductase catalytic subunit MsrP (337 aa).

A signal peptide (tat-type signal) is located at residues 1–48 (MLIKIPSRSDCSESEVTSETLYLSRRRLLGASFAGLALASGLPRLGFA). Mo-molybdopterin contacts are provided by residues Asn94, 97-98 (YE), Cys152, Thr187, Asn237, Arg242, and 253-255 (SIK).

This sequence belongs to the MsrP family. Heterodimer of a catalytic subunit (MsrP) and a heme-binding subunit (MsrQ). It depends on Mo-molybdopterin as a cofactor. Post-translationally, predicted to be exported by the Tat system. The position of the signal peptide cleavage has not been experimentally proven.

The protein resides in the periplasm. It catalyses the reaction L-methionyl-[protein] + a quinone + H2O = L-methionyl-(S)-S-oxide-[protein] + a quinol. The catalysed reaction is L-methionyl-[protein] + a quinone + H2O = L-methionyl-(R)-S-oxide-[protein] + a quinol. In terms of biological role, part of the MsrPQ system that repairs oxidized periplasmic proteins containing methionine sulfoxide residues (Met-O), using respiratory chain electrons. Thus protects these proteins from oxidative-stress damage caused by reactive species of oxygen and chlorine generated by the host defense mechanisms. MsrPQ is essential for the maintenance of envelope integrity under bleach stress, rescuing a wide series of structurally unrelated periplasmic proteins from methionine oxidation. The catalytic subunit MsrP is non-stereospecific, being able to reduce both (R-) and (S-) diastereoisomers of methionine sulfoxide. This is Protein-methionine-sulfoxide reductase catalytic subunit MsrP from Pseudomonas aeruginosa (strain ATCC 15692 / DSM 22644 / CIP 104116 / JCM 14847 / LMG 12228 / 1C / PRS 101 / PAO1).